Reading from the N-terminus, the 238-residue chain is MRHLHHQTSQIKLWAVIPAAGSGSRFSKTELKQYQYIQDATVIEHTVKRLSQLPLTGYVLAIGKQDTFASTLSFQDKHKAHFCNGGVERVHSVLNALNYLSQIAEEDDWVLVHDAARPCVTFECLNTLVKNAIETNQSAILAIPVRDTLKQVNQEQQIDKTVSRELLWQAQTPQIAKIGILKKAIETALKNNLTITDEASALESIGESVQVVMGRSDNIKITYPDDLELARLILQSQN.

Belongs to the IspD/TarI cytidylyltransferase family. IspD subfamily.

The catalysed reaction is 2-C-methyl-D-erythritol 4-phosphate + CTP + H(+) = 4-CDP-2-C-methyl-D-erythritol + diphosphate. It participates in isoprenoid biosynthesis; isopentenyl diphosphate biosynthesis via DXP pathway; isopentenyl diphosphate from 1-deoxy-D-xylulose 5-phosphate: step 2/6. Its function is as follows. Catalyzes the formation of 4-diphosphocytidyl-2-C-methyl-D-erythritol from CTP and 2-C-methyl-D-erythritol 4-phosphate (MEP). This Acinetobacter baumannii (strain ATCC 17978 / DSM 105126 / CIP 53.77 / LMG 1025 / NCDC KC755 / 5377) protein is 2-C-methyl-D-erythritol 4-phosphate cytidylyltransferase.